The primary structure comprises 162 residues: Probable chemoreceptor glutamine deamidase CheD (162 aa).

This sequence belongs to the CheD family.

The enzyme catalyses L-glutaminyl-[protein] + H2O = L-glutamyl-[protein] + NH4(+). Functionally, probably deamidates glutamine residues to glutamate on methyl-accepting chemotaxis receptors (MCPs), playing an important role in chemotaxis. The sequence is that of Probable chemoreceptor glutamine deamidase CheD from Clostridium botulinum (strain ATCC 19397 / Type A).